The sequence spans 138 residues: Putative pre-16S rRNA nuclease (138 aa).

The protein belongs to the YqgF nuclease family.

Its subcellular location is the cytoplasm. In terms of biological role, could be a nuclease involved in processing of the 5'-end of pre-16S rRNA. The chain is Putative pre-16S rRNA nuclease from Escherichia coli O157:H7.